Here is a 46-residue protein sequence, read N- to C-terminus: Alpha-1-antiproteinase (46 aa).

S30 carries the post-translational modification Phosphoserine.

Belongs to the serpin family. N-glycosylated; contains bi- and triantennary glycans with a bisecting N-acetylglucosamine and fucose residue. In terms of tissue distribution, plasma.

The protein resides in the secreted. The chain is Alpha-1-antiproteinase from Notamacropus eugenii (Tammar wallaby).